The chain runs to 199 residues: Recombination protein RecR (199 aa).

Residues 58–73 (CARCGNITSADLCDIC) form a C4-type zinc finger. Positions 81–176 (GELCVVEDVA…QVTSLAQGVP (96 aa)) constitute a Toprim domain.

Belongs to the RecR family.

Its function is as follows. May play a role in DNA repair. It seems to be involved in an RecBC-independent recombinational process of DNA repair. It may act with RecF and RecO. This is Recombination protein RecR from Cereibacter sphaeroides (strain ATCC 17025 / ATH 2.4.3) (Rhodobacter sphaeroides).